We begin with the raw amino-acid sequence, 194 residues long: MISRLTGKLVEKNPPQIVIDVNGVGYEADVSMQTFYNLPPVGESVQLFTQLIIREDAHLLFGFATAEERKTFRQLIKVGGIGAKTALGILSAMTADELARAVAEEDVKRLSSAPGIGKKTAERMVLELRGKLVAHTVTDGLFAASPAADETEDIVSTLLALGYNEREAKAAVKGVPKGTDVGEGVRLALKNLLK.

The segment at 1 to 64 (MISRLTGKLV…EDAHLLFGFA (64 aa)) is domain I. The tract at residues 65-143 (TAEERKTFRQ…AHTVTDGLFA (79 aa)) is domain II. Residues 144 to 147 (ASPA) form a flexible linker region. Residues 147 to 194 (AADETEDIVSTLLALGYNEREAKAAVKGVPKGTDVGEGVRLALKNLLK) form a domain III region.

The protein belongs to the RuvA family. Homotetramer. Forms an RuvA(8)-RuvB(12)-Holliday junction (HJ) complex. HJ DNA is sandwiched between 2 RuvA tetramers; dsDNA enters through RuvA and exits via RuvB. An RuvB hexamer assembles on each DNA strand where it exits the tetramer. Each RuvB hexamer is contacted by two RuvA subunits (via domain III) on 2 adjacent RuvB subunits; this complex drives branch migration. In the full resolvosome a probable DNA-RuvA(4)-RuvB(12)-RuvC(2) complex forms which resolves the HJ.

Its subcellular location is the cytoplasm. Its function is as follows. The RuvA-RuvB-RuvC complex processes Holliday junction (HJ) DNA during genetic recombination and DNA repair, while the RuvA-RuvB complex plays an important role in the rescue of blocked DNA replication forks via replication fork reversal (RFR). RuvA specifically binds to HJ cruciform DNA, conferring on it an open structure. The RuvB hexamer acts as an ATP-dependent pump, pulling dsDNA into and through the RuvAB complex. HJ branch migration allows RuvC to scan DNA until it finds its consensus sequence, where it cleaves and resolves the cruciform DNA. The sequence is that of Holliday junction branch migration complex subunit RuvA from Neisseria gonorrhoeae (strain ATCC 700825 / FA 1090).